The sequence spans 144 residues: D-aminoacyl-tRNA deacylase (144 aa).

Positions 136-137 match the Gly-cisPro motif, important for rejection of L-amino acids motif; that stretch reads GP.

It belongs to the DTD family. In terms of assembly, homodimer.

Its subcellular location is the cytoplasm. It carries out the reaction glycyl-tRNA(Ala) + H2O = tRNA(Ala) + glycine + H(+). The catalysed reaction is a D-aminoacyl-tRNA + H2O = a tRNA + a D-alpha-amino acid + H(+). Functionally, an aminoacyl-tRNA editing enzyme that deacylates mischarged D-aminoacyl-tRNAs. Also deacylates mischarged glycyl-tRNA(Ala), protecting cells against glycine mischarging by AlaRS. Acts via tRNA-based rather than protein-based catalysis; rejects L-amino acids rather than detecting D-amino acids in the active site. By recycling D-aminoacyl-tRNA to D-amino acids and free tRNA molecules, this enzyme counteracts the toxicity associated with the formation of D-aminoacyl-tRNA entities in vivo and helps enforce protein L-homochirality. The polypeptide is D-aminoacyl-tRNA deacylase (Aliivibrio fischeri (strain MJ11) (Vibrio fischeri)).